A 284-amino-acid chain; its full sequence is MPIYKPSELRLFLNQLGIFPKKGLSQNFLIDGNIIRKIVRASDVQPGNLVLEIGPGPGSLTQAMLEVEAHVVAVEKDFVLARELKRFQTPSKQLEIFCEDILMFSVEEELQSRLRDDQKAKVIANLPYHLTTPILAEMVVRRKLFSSLTVMVQEEVARRMTALPGQSDYSSFTIFLNFYSKPRYGFTVSRNCFYPAPKVDSAIVVLELKEPPPNIDAQVFFKITRTAFEQRRKMLRASLKSLFDPSKISNALEIIGQNPQARPEVLSLEDFIKLYHELYSSERH.

The S-adenosyl-L-methionine site is built by asparagine 27, leucine 29, glycine 54, glutamate 75, aspartate 100, and asparagine 125.

This sequence belongs to the class I-like SAM-binding methyltransferase superfamily. rRNA adenine N(6)-methyltransferase family. RsmA subfamily.

It localises to the cytoplasm. The catalysed reaction is adenosine(1518)/adenosine(1519) in 16S rRNA + 4 S-adenosyl-L-methionine = N(6)-dimethyladenosine(1518)/N(6)-dimethyladenosine(1519) in 16S rRNA + 4 S-adenosyl-L-homocysteine + 4 H(+). Specifically dimethylates two adjacent adenosines (A1518 and A1519) in the loop of a conserved hairpin near the 3'-end of 16S rRNA in the 30S particle. May play a critical role in biogenesis of 30S subunits. The polypeptide is Ribosomal RNA small subunit methyltransferase A (Protochlamydia amoebophila (strain UWE25)).